Reading from the N-terminus, the 47-residue chain is Large ribosomal subunit protein bL36B (47 aa).

The protein belongs to the bacterial ribosomal protein bL36 family.

The chain is Large ribosomal subunit protein bL36B from Pectobacterium atrosepticum (strain SCRI 1043 / ATCC BAA-672) (Erwinia carotovora subsp. atroseptica).